We begin with the raw amino-acid sequence, 348 residues long: Ferredoxin--NADP reductase (348 aa).

FAD contacts are provided by threonine 26, glutamate 45, glutamine 53, tyrosine 58, alanine 98, phenylalanine 133, aspartate 299, and serine 340.

Belongs to the ferredoxin--NADP reductase type 2 family. As to quaternary structure, homodimer. FAD serves as cofactor.

The catalysed reaction is 2 reduced [2Fe-2S]-[ferredoxin] + NADP(+) + H(+) = 2 oxidized [2Fe-2S]-[ferredoxin] + NADPH. This is Ferredoxin--NADP reductase from Prosthecochloris aestuarii (strain DSM 271 / SK 413).